Here is a 348-residue protein sequence, read N- to C-terminus: Protein RecA (348 aa).

Residue 66–73 (GPESSGKT) coordinates ATP.

It belongs to the RecA family.

The protein localises to the cytoplasm. Functionally, can catalyze the hydrolysis of ATP in the presence of single-stranded DNA, the ATP-dependent uptake of single-stranded DNA by duplex DNA, and the ATP-dependent hybridization of homologous single-stranded DNAs. It interacts with LexA causing its activation and leading to its autocatalytic cleavage. This Neisseria meningitidis serogroup C / serotype 2a (strain ATCC 700532 / DSM 15464 / FAM18) protein is Protein RecA.